The chain runs to 273 residues: Large ribosomal subunit protein uL2 (273 aa).

Residues 221–263 (RGTAMNPVDHPHGGGEGRNFGKHPVTPWGVQTKGKKTRHNKRT) are disordered. Residues 253 to 263 (KGKKTRHNKRT) show a composition bias toward basic residues.

This sequence belongs to the universal ribosomal protein uL2 family. As to quaternary structure, part of the 50S ribosomal subunit. Forms a bridge to the 30S subunit in the 70S ribosome.

One of the primary rRNA binding proteins. Required for association of the 30S and 50S subunits to form the 70S ribosome, for tRNA binding and peptide bond formation. It has been suggested to have peptidyltransferase activity; this is somewhat controversial. Makes several contacts with the 16S rRNA in the 70S ribosome. The protein is Large ribosomal subunit protein uL2 of Actinobacillus succinogenes (strain ATCC 55618 / DSM 22257 / CCUG 43843 / 130Z).